Reading from the N-terminus, the 408-residue chain is Broad specificity amino-acid racemase (408 aa).

The N-terminal stretch at 1-24 (MNFKKTLLSIAIASASLTPAFSYS) is a signal peptide. A disulfide bond links Cys71 and Cys97. The active-site Proton acceptor is Lys75. Residue Lys75 is modified to N6-(pyridoxal phosphate)lysine. Residue Arg174 participates in substrate binding. Tyr300 functions as the Proton acceptor in the catalytic mechanism. Met348 is a substrate binding site.

Belongs to the alanine racemase family. Bsr subfamily. It depends on pyridoxal 5'-phosphate as a cofactor.

Its subcellular location is the periplasm. It catalyses the reaction an L-alpha-amino acid = a D-alpha-amino acid. It carries out the reaction L-lysine = D-lysine. The enzyme catalyses L-arginine = D-arginine. Its function is as follows. Amino-acid racemase able to utilize a broad range of substrates. This chain is Broad specificity amino-acid racemase (alr), found in Vibrio vulnificus (strain CMCP6).